Reading from the N-terminus, the 214-residue chain is uncharacterized protein (214 aa).

The helical transmembrane segment at 9 to 31 (FLYFAISVLVNLLFLKILYIYLF) threads the bilayer. The segment at 53–74 (APPKKPGKPQKKVVKKKPEAVS) is disordered. Basic residues predominate over residues 54–67 (PPKKPGKPQKKVVK).

The protein resides in the membrane. This is an uncharacterized protein from Aquifex aeolicus (strain VF5).